The chain runs to 300 residues: Homoserine kinase (300 aa).

An ATP-binding site is contributed by 87-97 (PISRGLGSSSA).

It belongs to the GHMP kinase family. Homoserine kinase subfamily.

It is found in the cytoplasm. It carries out the reaction L-homoserine + ATP = O-phospho-L-homoserine + ADP + H(+). Its pathway is amino-acid biosynthesis; L-threonine biosynthesis; L-threonine from L-aspartate: step 4/5. Functionally, catalyzes the ATP-dependent phosphorylation of L-homoserine to L-homoserine phosphate. This Clostridium kluyveri (strain ATCC 8527 / DSM 555 / NBRC 12016 / NCIMB 10680 / K1) protein is Homoserine kinase.